Reading from the N-terminus, the 480-residue chain is Aromatic-L-amino-acid decarboxylase (480 aa).

Met-1 carries the post-translational modification N-acetylmethionine. A run of 2 repeats spans residues 58-115 and 118-178. The segment at 58 to 178 is 2 X approximate tandem repeats; the sequence is KDIEKIIMPG…AASPEFTQAA (121 aa). Thr-82 provides a ligand contact to substrate. Ala-148 and Ser-149 together coordinate pyridoxal 5'-phosphate. His-192 provides a ligand contact to substrate. Pyridoxal 5'-phosphate is bound by residues Thr-246 and Asn-300. Position 303 is an N6-(pyridoxal phosphate)lysine (Lys-303).

This sequence belongs to the group II decarboxylase family. In terms of assembly, homodimer. Pyridoxal 5'-phosphate serves as cofactor.

It carries out the reaction L-dopa + H(+) = dopamine + CO2. The enzyme catalyses 5-hydroxy-L-tryptophan + H(+) = serotonin + CO2. It participates in catecholamine biosynthesis; dopamine biosynthesis; dopamine from L-tyrosine: step 2/2. Its function is as follows. Catalyzes the decarboxylation of L-3,4-dihydroxyphenylalanine (DOPA) to dopamine and L-5-hydroxytryptophan to serotonin. In Mus musculus (Mouse), this protein is Aromatic-L-amino-acid decarboxylase (Ddc).